A 463-amino-acid chain; its full sequence is NADH-quinone oxidoreductase subunit N (463 aa).

14 helical membrane passes run 5 to 25 (LLYG…LMLL), 34 to 54 (AGSA…VMQL), 72 to 92 (FSEI…VYSL), 99 to 119 (KYWI…DSAG), 120 to 140 (FISL…LMVL), 154 to 174 (YLLL…LVYG), 196 to 216 (LAAS…FPFH), 230 to 250 (VTAF…VRIL), 259 to 279 (AVTV…ITAI), 286 to 303 (KMLA…MFAL), 314 to 334 (LLYY…CFSI), 356 to 376 (AILL…PGFL), 393 to 413 (VAVL…GVVL), and 432 to 452 (LCWT…FMLL).

This sequence belongs to the complex I subunit 2 family. NDH-1 is composed of 14 different subunits. Subunits NuoA, H, J, K, L, M, N constitute the membrane sector of the complex.

Its subcellular location is the cell inner membrane. It carries out the reaction a quinone + NADH + 5 H(+)(in) = a quinol + NAD(+) + 4 H(+)(out). In terms of biological role, NDH-1 shuttles electrons from NADH, via FMN and iron-sulfur (Fe-S) centers, to quinones in the respiratory chain. The immediate electron acceptor for the enzyme in this species is believed to be ubiquinone. Couples the redox reaction to proton translocation (for every two electrons transferred, four hydrogen ions are translocated across the cytoplasmic membrane), and thus conserves the redox energy in a proton gradient. The sequence is that of NADH-quinone oxidoreductase subunit N from Pelobacter propionicus (strain DSM 2379 / NBRC 103807 / OttBd1).